A 365-amino-acid chain; its full sequence is 3-isopropylmalate dehydrogenase (365 aa).

80 to 93 provides a ligand contact to NAD(+); that stretch reads GPKWADNTGDQRPE. The substrate site is built by Arg100, Arg110, Arg138, and Asp223. Mg(2+)-binding residues include Asp223, Asp247, and Asp251. 280 to 292 serves as a coordination point for NAD(+); it reads GSAPDIAGQDVAN. The interval 337–365 is disordered; sequence NEEDASTSAFGREVATRAADSVPQNAPTP.

It belongs to the isocitrate and isopropylmalate dehydrogenases family. LeuB type 1 subfamily. As to quaternary structure, homodimer. It depends on Mg(2+) as a cofactor. Requires Mn(2+) as cofactor.

The protein localises to the cytoplasm. The catalysed reaction is (2R,3S)-3-isopropylmalate + NAD(+) = 4-methyl-2-oxopentanoate + CO2 + NADH. It functions in the pathway amino-acid biosynthesis; L-leucine biosynthesis; L-leucine from 3-methyl-2-oxobutanoate: step 3/4. Its function is as follows. Catalyzes the oxidation of 3-carboxy-2-hydroxy-4-methylpentanoate (3-isopropylmalate) to 3-carboxy-4-methyl-2-oxopentanoate. The product decarboxylates to 4-methyl-2 oxopentanoate. The chain is 3-isopropylmalate dehydrogenase from Salinibacter ruber (strain DSM 13855 / M31).